The following is a 51-amino-acid chain: uncharacterized protein (51 aa).

The protein to E.coli YdaF.

This is an uncharacterized protein from Escherichia coli O157:H7.